Reading from the N-terminus, the 514-residue chain is Steroid 17-alpha-hydroxylase/17,20 lyase (514 aa).

Cys445 is a binding site for heme.

The protein belongs to the cytochrome P450 family. Requires heme as cofactor.

The protein resides in the membrane. The enzyme catalyses a C21-steroid + reduced [NADPH--hemoprotein reductase] + O2 = a 17alpha-hydroxy-C21-steroid + oxidized [NADPH--hemoprotein reductase] + H2O + H(+). It catalyses the reaction 17alpha-hydroxyprogesterone + reduced [NADPH--hemoprotein reductase] + O2 = androst-4-ene-3,17-dione + acetate + oxidized [NADPH--hemoprotein reductase] + H2O + 2 H(+). The catalysed reaction is 17alpha-hydroxypregnenolone + reduced [NADPH--hemoprotein reductase] + O2 = 3beta-hydroxyandrost-5-en-17-one + acetate + oxidized [NADPH--hemoprotein reductase] + H2O + 2 H(+). It functions in the pathway lipid metabolism; steroid biosynthesis. Conversion of pregnenolone and progesterone to their 17-alpha-hydroxylated products and subsequently to dehydroepiandrosterone (DHEA) and androstenedione. Catalyzes both the 17-alpha-hydroxylation and the 17,20-lyase reaction. The polypeptide is Steroid 17-alpha-hydroxylase/17,20 lyase (cyp17a1) (Ictalurus punctatus (Channel catfish)).